We begin with the raw amino-acid sequence, 154 residues long: Myoglobin (154 aa).

The region spanning 2-148 (GLSDGEWQLV…FRNDIAAKYK (147 aa)) is the Globin domain. Ser-4 bears the Phosphoserine mark. His-65 contributes to the nitrite binding site. His-65 serves as a coordination point for O2. Position 68 is a phosphothreonine (Thr-68). His-94 contributes to the heme b binding site.

Belongs to the globin family. Monomeric.

It localises to the cytoplasm. The protein resides in the sarcoplasm. It catalyses the reaction Fe(III)-heme b-[protein] + nitric oxide + H2O = Fe(II)-heme b-[protein] + nitrite + 2 H(+). The enzyme catalyses H2O2 + AH2 = A + 2 H2O. Monomeric heme protein which primary function is to store oxygen and facilitate its diffusion within muscle tissues. Reversibly binds oxygen through a pentacoordinated heme iron and enables its timely and efficient release as needed during periods of heightened demand. Depending on the oxidative conditions of tissues and cells, and in addition to its ability to bind oxygen, it also has a nitrite reductase activity whereby it regulates the production of bioactive nitric oxide. Under stress conditions, like hypoxia and anoxia, it also protects cells against reactive oxygen species thanks to its pseudoperoxidase activity. This chain is Myoglobin (MB), found in Ctenodactylus gundi (Northern gundi).